The primary structure comprises 1038 residues: Importin-7 (1038 aa).

An N-acetylmethionine modification is found at Met-1. Residues 22 to 101 (AERQLNEAHK…RENIVEAIIH (80 aa)) enclose the Importin N-terminal domain. Residues 881–910 (EHENDSDDDDEAEDDDETEELGSDEDDIDE) are disordered. Positions 884–910 (NDSDDDDEAEDDDETEELGSDEDDIDE) are enriched in acidic residues. Ser-886 carries the phosphoserine modification. Thr-898 carries the phosphothreonine modification. Phosphoserine is present on residues Ser-903 and Ser-1020.

It belongs to the importin beta family. Forms a heterodimer with KPNB1. Interacts with histone H1. Interacts with H2A, H2B, H3 and H4 histones. Interacts with SNUPN and XPO1. Interacts with RPS7 and RPL5. Interacts with RPL23A (via BIB domain). Binds directly to nuclear pore complexes. Interacts with SMAD4 and NUP93; translocates SMAD4 to the nucleus through the NPC upon BMP7 stimulation resulting in activation of SMAD4 signaling. Interacts with phosphorylated SMAD2; the interaction facilitates translocation of SMAD2 to the nucleus. Interacts with SRP19. Interacts with RUNX2; the interaction inhibits RUNX2 nuclear translocation in osteoblasts. Interacts with HDAC6, DLX3 and KLF4; the interaction facilitates HDAC6, DLX3 and KLF4 nuclear translocation in dental papilla cells. As to quaternary structure, (Microbial infection) Interacts with HIV-1 reverse transcription complex integrase and rev.

It localises to the cytoplasm. Its subcellular location is the nucleus. Functionally, functions in nuclear protein import, either by acting as autonomous nuclear transport receptor or as an adapter-like protein in association with the importin-beta subunit KPNB1. Acting autonomously, is thought to serve itself as receptor for nuclear localization signals (NLS) and to promote translocation of import substrates through the nuclear pore complex (NPC) by an energy requiring, Ran-dependent mechanism. At the nucleoplasmic side of the NPC, Ran binds to importin, the importin/substrate complex dissociates and importin is re-exported from the nucleus to the cytoplasm where GTP hydrolysis releases Ran. The directionality of nuclear import is thought to be conferred by an asymmetric distribution of the GTP- and GDP-bound forms of Ran between the cytoplasm and nucleus. Mediates autonomously the nuclear import of ribosomal proteins RPL23A, RPS7 and RPL5. In association with KPNB1 mediates the nuclear import of H1 histone and the Ran-binding site of IPO7 is not required but synergizes with that of KPNB1 in importin/substrate complex dissociation. Promotes odontoblast differentiation via promoting nuclear translocation of DLX3, KLF4, SMAD2, thereby facilitating the transcription of target genes that play a role in odontoblast differentiation. Facilitates BMP4-induced translocation of SMAD1 to the nucleus and recruitment to the MSX1 gene promoter, thereby promotes the expression of the odontogenic regulator MSX1 in dental mesenchymal cells. Also promotes odontoblast differentiation by facilitating the nuclear translocation of HDAC6 and subsequent repression of RUNX2 expression. Inhibits osteoblast differentiation by inhibiting nuclear translocation of RUNX2 and therefore inhibition of RUNX2 target gene transcription. In vitro, mediates nuclear import of H2A, H2B, H3 and H4 histones. In terms of biological role, (Microbial infection) Mediates the nuclear import of HIV-1 reverse transcription complex (RTC) integrase. Binds and mediates the nuclear import of HIV-1 Rev. This chain is Importin-7 (IPO7), found in Homo sapiens (Human).